We begin with the raw amino-acid sequence, 477 residues long: Glutamate--tRNA ligase 1 (477 aa).

The short motif at P12 to N22 is the 'HIGH' region element. The 'KMSKS' region signature appears at P253–R257. K256 contributes to the ATP binding site.

It belongs to the class-I aminoacyl-tRNA synthetase family. Glutamate--tRNA ligase type 1 subfamily. As to quaternary structure, monomer.

Its subcellular location is the cytoplasm. It catalyses the reaction tRNA(Glu) + L-glutamate + ATP = L-glutamyl-tRNA(Glu) + AMP + diphosphate. Functionally, catalyzes the attachment of glutamate to tRNA(Glu) in a two-step reaction: glutamate is first activated by ATP to form Glu-AMP and then transferred to the acceptor end of tRNA(Glu). This chain is Glutamate--tRNA ligase 1, found in Halorhodospira halophila (strain DSM 244 / SL1) (Ectothiorhodospira halophila (strain DSM 244 / SL1)).